The chain runs to 282 residues: Pantothenate synthetase (282 aa).

Met30–His37 is an ATP binding site. His37 (proton donor) is an active-site residue. Gln61 provides a ligand contact to (R)-pantoate. Residue Gln61 participates in beta-alanine binding. Gly149–Asp152 serves as a coordination point for ATP. Gln155 contributes to the (R)-pantoate binding site. Met186 to Arg189 contributes to the ATP binding site.

The protein belongs to the pantothenate synthetase family. As to quaternary structure, homodimer.

The protein localises to the cytoplasm. It carries out the reaction (R)-pantoate + beta-alanine + ATP = (R)-pantothenate + AMP + diphosphate + H(+). The protein operates within cofactor biosynthesis; (R)-pantothenate biosynthesis; (R)-pantothenate from (R)-pantoate and beta-alanine: step 1/1. Functionally, catalyzes the condensation of pantoate with beta-alanine in an ATP-dependent reaction via a pantoyl-adenylate intermediate. This Alteromonas mediterranea (strain DSM 17117 / CIP 110805 / LMG 28347 / Deep ecotype) protein is Pantothenate synthetase.